The sequence spans 98 residues: MGRRSFGFLYRSRDFLSKTPRERGRPSPAKLLKEFEVGDKVVIDVEPSIRRGMPHRRYQGKVGVVMGRRGEAYLVDIKLGGKTKHLIVLPVHLKKHSG.

It belongs to the eukaryotic ribosomal protein eL21 family.

This Korarchaeum cryptofilum (strain OPF8) protein is Large ribosomal subunit protein eL21.